We begin with the raw amino-acid sequence, 657 residues long: Transcription factor 12 (657 aa).

Residues 1-20 (MDEKGGTTSWGTSGQPSPSY) are compositionally biased toward polar residues. Disordered stretches follow at residues 1–76 (MDEK…SGLS), 89–285 (LGSP…QTGD), 297–340 (PDHT…YENS), 459–555 (VSAQ…ERRM), and 628–657 (KVSA…MGHM). The segment covering 30 to 43 (HYSDHLNDSRKGTH) has biased composition (basic and acidic residues). Polar residues-rich tracts occupy residues 49–70 (TPFS…SLYS) and 93–112 (AQLS…SATS). Residues 68 to 89 (LYSRDSGLSGCQSSLLRQELGL) form a leucine-zipper region. Residues 130–136 (KKVRKVP) carry the Nuclear localization signal motif. Composition is skewed to polar residues over residues 168–193 (MFAS…NGMS), 202–216 (GTST…SYGS), and 230–254 (VSPT…SSSP). Residues 300–311 (TSSSFPSNPSTP) are compositionally biased toward low complexity. Polar residues predominate over residues 312-340 (VGSPSPLTGASQWSRSGGQAPSSPNYENS). Composition is skewed to basic and acidic residues over residues 493 to 505 (IKSE…ENIH), 511 to 526 (DDMK…DIKV), and 543 to 555 (PEQK…ERRM). Residues 552-605 (ERRMANNARERLRVRDINEAFKELGRMCQLHLKSEKPQTKLLILHQAVAVILSL) enclose the bHLH domain. Positions 607–630 (QQVRERNLNPKAACLKRREEEKVS) are class A specific domain. Positions 648-657 (SETTNPMGHM) are enriched in polar residues.

As to quaternary structure, efficient DNA binding requires dimerization with another bHLH protein. Forms homo- or heterooligomers with myogenin, E12 and ITF2 proteins.

The protein localises to the nucleus. In terms of biological role, transcriptional regulator. Involved in the initiation of neuronal differentiation. Activates transcription by binding to the E box-containing promoter. In Gallus gallus (Chicken), this protein is Transcription factor 12 (TCF12).